A 469-amino-acid polypeptide reads, in one-letter code: UTP--glucose-1-phosphate uridylyltransferase 2 (469 aa).

Ala-2 carries the post-translational modification N-acetylalanine. UTP-binding positions include 85-88 (LNGG), Lys-99, Gln-162, and Gly-191. 87-88 (GG) contacts substrate. Substrate is bound by residues His-192 and 220–222 (NSD). Asp-222 and Lys-360 together coordinate UTP.

This sequence belongs to the UDPGP type 1 family. As to expression, expressed in cauline leaves, flowers and siliques.

It is found in the cytoplasm. The catalysed reaction is alpha-D-glucose 1-phosphate + UTP + H(+) = UDP-alpha-D-glucose + diphosphate. Converts glucose 1-phosphate to UDP-glucose, which is the major glycosyl donor for polysaccharides. Acts redundantly with UGP1 and is essential for the synthesis of sucrose, starch and cell wall, and callose deposition. This chain is UTP--glucose-1-phosphate uridylyltransferase 2, found in Arabidopsis thaliana (Mouse-ear cress).